Consider the following 635-residue polypeptide: Probable potassium transport system protein Kup (635 aa).

A run of 12 helical transmembrane segments spans residues Leu22–Leu42, Val59–Val79, Met111–Ile131, Ala148–Leu168, Ala180–Met200, Val216–Ala236, Trp259–Leu279, Ala297–Ile317, Ile349–Phe369, Ala378–Ala398, Val404–Phe424, and Ile428–Leu448.

This sequence belongs to the HAK/KUP transporter (TC 2.A.72) family.

Its subcellular location is the cell inner membrane. The catalysed reaction is K(+)(in) + H(+)(in) = K(+)(out) + H(+)(out). In terms of biological role, transport of potassium into the cell. Likely operates as a K(+):H(+) symporter. The chain is Probable potassium transport system protein Kup from Xanthomonas oryzae pv. oryzae (strain KACC10331 / KXO85).